We begin with the raw amino-acid sequence, 44 residues long: Benzaldehyde dehydrogenase [NAD(+)] II (44 aa).

It belongs to the aldehyde dehydrogenase family.

The catalysed reaction is benzaldehyde + NAD(+) + H2O = benzoate + NADH + 2 H(+). The chain is Benzaldehyde dehydrogenase [NAD(+)] II from Acinetobacter guillouiae (Acinetobacter genomosp. 11).